The chain runs to 670 residues: Methionine--tRNA ligase (670 aa).

Residues 14-24 carry the 'HIGH' region motif; that stretch reads PYANGHLHLGH. Positions 145, 148, 158, and 161 each coordinate Zn(2+). Positions 330–334 match the 'KMSKS' region motif; that stretch reads KMSKS. Lys333 serves as a coordination point for ATP. One can recognise a tRNA-binding domain in the interval 570–670; sequence DFAKVDLRIA…AGALPGMKVK (101 aa).

It belongs to the class-I aminoacyl-tRNA synthetase family. MetG type 1 subfamily. In terms of assembly, homodimer. The cofactor is Zn(2+).

The protein resides in the cytoplasm. It catalyses the reaction tRNA(Met) + L-methionine + ATP = L-methionyl-tRNA(Met) + AMP + diphosphate. Functionally, is required not only for elongation of protein synthesis but also for the initiation of all mRNA translation through initiator tRNA(fMet) aminoacylation. This Legionella pneumophila (strain Paris) protein is Methionine--tRNA ligase.